We begin with the raw amino-acid sequence, 75 residues long: Small ribosomal subunit protein bS18 (75 aa).

Belongs to the bacterial ribosomal protein bS18 family. As to quaternary structure, part of the 30S ribosomal subunit. Forms a tight heterodimer with protein bS6.

Functionally, binds as a heterodimer with protein bS6 to the central domain of the 16S rRNA, where it helps stabilize the platform of the 30S subunit. This chain is Small ribosomal subunit protein bS18, found in Alteromonas mediterranea (strain DSM 17117 / CIP 110805 / LMG 28347 / Deep ecotype).